Consider the following 503-residue polypeptide: Pentatricopeptide repeat-containing protein At2g30100, chloroplastic (503 aa).

The N-terminal 50 residues, Met-1–Arg-50, are a transit peptide targeting the chloroplast. 3 PPR repeats span residues Ile-341 to Pro-375, Glu-376 to Arg-410, and Lys-411 to Pro-445.

It belongs to the PPR family. P subfamily.

Its subcellular location is the plastid. It localises to the chloroplast. In Arabidopsis thaliana (Mouse-ear cress), this protein is Pentatricopeptide repeat-containing protein At2g30100, chloroplastic.